The primary structure comprises 297 residues: Ribonuclease HIII (297 aa).

An RNase H type-2 domain is found at I81 to K297. A divalent metal cation contacts are provided by D87, E88, and D192.

This sequence belongs to the RNase HII family. RnhC subfamily. Requires Mn(2+) as cofactor. The cofactor is Mg(2+).

It localises to the cytoplasm. It catalyses the reaction Endonucleolytic cleavage to 5'-phosphomonoester.. Functionally, endonuclease that specifically degrades the RNA of RNA-DNA hybrids. The protein is Ribonuclease HIII of Streptococcus agalactiae serotype III (strain NEM316).